Reading from the N-terminus, the 774-residue chain is Transforming acidic coiled-coil-containing protein 1 (774 aa).

At alanine 2 the chain carries N-acetylalanine. The interval 2-56 (AFSPWQILSPVQWAKWTWSAVRGSGAGEDEAGGPEGDPEEEEDSQAETKSLSFSS) is interaction with LSM7 and SNRPG. A phosphoserine mark is found at serine 4, serine 10, and serine 45. A disordered region spans residues 21–142 (AVRGSGAGED…VKDVRGKAEH (122 aa)). Positions 28–46 (GEDEAGGPEGDPEEEEDSQ) are enriched in acidic residues. The segment covering 48–61 (ETKSLSFSSDSEGN) has biased composition (polar residues). The segment covering 88-99 (PEAKPQESREAD) has biased composition (basic and acidic residues). A compositionally biased stretch (polar residues) spans 113–128 (DTCSRSSENEAPQATV). The span at 131-142 (HPVKDVRGKAEH) shows a compositional bias: basic and acidic residues. Phosphoserine is present on residues serine 148 and serine 154. An interaction with TDRD7 region spans residues 153-255 (FSIETRNCTD…PEMLMEGSPL (103 aa)). An interaction with YEATS4 region spans residues 207 to 424 (EAFTEASLKT…NNINTDDSGD (218 aa)). The interval 214–428 (LKTGGPCPEP…TDDSGDPCKP (215 aa)) is disordered. SPAZ domains lie at 216 to 294 (TGGP…TAGV) and 354 to 504 (SKPV…TDEE). At serine 228 the chain carries Phosphoserine; by AURKC. Residues 228-241 (SKLRKPKPVSLRKK) show a composition bias toward basic residues. Phosphoserine occurs at positions 376 and 401. Residues 397-407 (ILQNSPPLSSK) show a composition bias toward polar residues. A Bipartite nuclear localization signal motif is present at residues 452 to 468 (PKKAKSRLITSGCKVKK). Phosphoserine is present on residues serine 480 and serine 560. A coiled-coil region spans residues 579–774 (IREEIITKEI…ELIAKLGKTD (196 aa)). The interaction with CH-TOG stretch occupies residues 670-774 (VLEGFKKNEE…ELIAKLGKTD (105 aa)).

Belongs to the TACC family. As to quaternary structure, interacts with CH-TOG and YEATS4. Interacts with the AURKA and AURKB and AURKC. Interacts with LSM7, TDRD7 and SNRPG. Interacts with GCN5L2 and PCAF. Interacts with the thyroid hormone receptors THRB and THRA, predominantly with isoform alpha-2. The interaction with THRA isoform alpha-1 and THRB is decreased in the presence of thyroid hormone T3. Interacts with RARA in the nucleus. Also interacts with other nuclear receptors, including ESR1, NR3C1, PPARG and RXRA, preferentially in the absence of their hormonal ligands.

The protein resides in the cytoplasm. Its subcellular location is the nucleus. It is found in the cytoskeleton. The protein localises to the microtubule organizing center. It localises to the centrosome. The protein resides in the midbody. Involved in transcription regulation induced by nuclear receptors, including in T3 thyroid hormone and all-trans retinoic acid pathways. Might promote the nuclear localization of the receptors. Likely involved in the processes that promote cell division prior to the formation of differentiated tissues. This Mus musculus (Mouse) protein is Transforming acidic coiled-coil-containing protein 1 (Tacc1).